We begin with the raw amino-acid sequence, 149 residues long: Cell division protein SepF (149 aa).

It belongs to the SepF family. Homodimer. Interacts with FtsZ.

The protein resides in the cytoplasm. Functionally, cell division protein that is part of the divisome complex and is recruited early to the Z-ring. Probably stimulates Z-ring formation, perhaps through the cross-linking of FtsZ protofilaments. Its function overlaps with FtsA. In Clostridium perfringens (strain ATCC 13124 / DSM 756 / JCM 1290 / NCIMB 6125 / NCTC 8237 / Type A), this protein is Cell division protein SepF.